The sequence spans 142 residues: Midkine-B (142 aa).

The first 20 residues, 1 to 20 (MELRAFCVILLITILAVSSQ), serve as a signal peptide directing secretion. 5 disulfides stabilise this stretch: cysteine 36–cysteine 60, cysteine 44–cysteine 69, cysteine 51–cysteine 73, cysteine 83–cysteine 115, and cysteine 93–cysteine 125.

This sequence belongs to the pleiotrophin family. In adults, expression is highest in the brain, eye and bone, with lower expression in the heart and lung. Not expressed in the ovary. In the tailbud stage embryo, expressed in the head and tail regions as well as in the central nervous system (CNS).

It localises to the secreted. Secreted protein that functions as a cytokine and growth factor and mediates its signal through cell-surface proteoglycan and non-proteoglycan receptors. Binds cell-surface proteoglycan receptors via their chondroitin sulfate (CS) groups. Thereby regulates many processes like inflammatory response, cell proliferation, cell adhesion, cell growth, cell survival, tissue regeneration, cell differentiation and cell migration. Inhibits mesoderm formation and promotes neural formation during development. Plays a role in development of the neuromuscular junction (NMJ). Has antibacterial activity against both Gram-positive and Gram-negative bacteria. This is Midkine-B (mdk-b) from Xenopus laevis (African clawed frog).